We begin with the raw amino-acid sequence, 417 residues long: Gamma-glutamyl phosphate reductase (417 aa).

It belongs to the gamma-glutamyl phosphate reductase family.

The protein localises to the cytoplasm. It carries out the reaction L-glutamate 5-semialdehyde + phosphate + NADP(+) = L-glutamyl 5-phosphate + NADPH + H(+). Its pathway is amino-acid biosynthesis; L-proline biosynthesis; L-glutamate 5-semialdehyde from L-glutamate: step 2/2. Catalyzes the NADPH-dependent reduction of L-glutamate 5-phosphate into L-glutamate 5-semialdehyde and phosphate. The product spontaneously undergoes cyclization to form 1-pyrroline-5-carboxylate. The protein is Gamma-glutamyl phosphate reductase of Escherichia coli O127:H6 (strain E2348/69 / EPEC).